The chain runs to 188 residues: ATP-dependent Clp protease proteolytic subunit 1 (188 aa).

The Nucleophile role is filled by serine 90. The active site involves histidine 115.

It belongs to the peptidase S14 family. Fourteen ClpP subunits assemble into 2 heptameric rings which stack back to back to give a disk-like structure with a central cavity, resembling the structure of eukaryotic proteasomes.

Its subcellular location is the cytoplasm. It carries out the reaction Hydrolysis of proteins to small peptides in the presence of ATP and magnesium. alpha-casein is the usual test substrate. In the absence of ATP, only oligopeptides shorter than five residues are hydrolyzed (such as succinyl-Leu-Tyr-|-NHMec, and Leu-Tyr-Leu-|-Tyr-Trp, in which cleavage of the -Tyr-|-Leu- and -Tyr-|-Trp bonds also occurs).. Cleaves peptides in various proteins in a process that requires ATP hydrolysis. Has a chymotrypsin-like activity. Plays a major role in the degradation of misfolded proteins. In Corynebacterium jeikeium (strain K411), this protein is ATP-dependent Clp protease proteolytic subunit 1.